The primary structure comprises 224 residues: Casparian strip membrane protein 3 (224 aa).

Residues 1–30 (MESKKEGVASAPTSPESRRTRSNGKGKTIA) are disordered. Over 1–57 (MESKKEGVASAPTSPESRRTRSNGKGKTIAEATPPSVTVVSTKVTPSPRGGWRKGAA) the chain is Cytoplasmic. The helical transmembrane segment at 58–78 (ILDFILRLGAISSAIGAAAVM) threads the bilayer. At 79–105 (GNNEQILPFFTQFFQFHVQWDDFPMFQ) the chain is on the extracellular side. A helical membrane pass occupies residues 106–126 (FFVFANGAAVVFLILSLPFSI). Over 127–138 (VCIVRPFAVGPR) the chain is Cytoplasmic. The chain crosses the membrane as a helical span at residues 139 to 159 (LLLVIVDIFAMALVIAAASAA). Residues 160–191 (AAVVYLAHNGSQDANWIAICQQYTDFCQVTSQ) lie on the Extracellular side of the membrane. N168 is a glycosylation site (N-linked (GlcNAc...) asparagine). A helical transmembrane segment spans residues 192-212 (AVVASFVAAVFLICLIVLSSV). Residues 213–224 (ALKKGLKREFGW) are Cytoplasmic-facing.

It belongs to the Casparian strip membrane proteins (CASP) family. Homodimer and heterodimers.

It localises to the cell membrane. Its function is as follows. Regulates membrane-cell wall junctions and localized cell wall deposition. Required for establishment of the Casparian strip membrane domain (CSD) and the subsequent formation of Casparian strips, a cell wall modification of the root endodermis that determines an apoplastic barrier between the intraorganismal apoplasm and the extraorganismal apoplasm and prevents lateral diffusion. This Vigna unguiculata (Cowpea) protein is Casparian strip membrane protein 3.